Reading from the N-terminus, the 404-residue chain is Serine palmitoyltransferase (404 aa).

Residues G112–Y113, S185, H213, and T241 contribute to the pyridoxal 5'-phosphate site. Position 244 is an N6-(pyridoxal phosphate)lysine (K244).

It belongs to the class-II pyridoxal-phosphate-dependent aminotransferase family. Pyridoxal 5'-phosphate is required as a cofactor.

It is found in the cytoplasm. It carries out the reaction L-serine + hexadecanoyl-CoA + H(+) = 3-oxosphinganine + CO2 + CoA. It participates in lipid metabolism; sphingolipid metabolism. Its function is as follows. Involved in de novo bacterial ceramide synthesis. Catalyzes the condensation of L-serine with palmitoyl-CoA (hexadecanoyl-CoA) to produce 3-oxosphinganine. Can also condense serine and C16:1-CoA, but shows a preference for palmitoyl-CoA. The sequence is that of Serine palmitoyltransferase from Caulobacter vibrioides (strain NA1000 / CB15N) (Caulobacter crescentus).